The sequence spans 248 residues: Probable transcriptional regulatory protein Ccel_0181 (248 aa).

It belongs to the TACO1 family.

The protein localises to the cytoplasm. In Ruminiclostridium cellulolyticum (strain ATCC 35319 / DSM 5812 / JCM 6584 / H10) (Clostridium cellulolyticum), this protein is Probable transcriptional regulatory protein Ccel_0181.